The primary structure comprises 549 residues: Probable acyl-activating enzyme 10 (549 aa).

Belongs to the ATP-dependent AMP-binding enzyme family. As to expression, expressed at low levels in roots.

Functionally, may act as an acid--thiol ligase that activates carboxylic acids by forming acyl-CoAs. The polypeptide is Probable acyl-activating enzyme 10 (AEE10) (Arabidopsis thaliana (Mouse-ear cress)).